The sequence spans 910 residues: Protein translocase subunit SecA (910 aa).

ATP-binding positions include Gln87, 105 to 109 (GEGKT), and Asp508. The interval 848-910 (RLSQSQFQHQ…KYKHCHGQLS (63 aa)) is disordered. Residues 869-880 (AQVQAAQQGVAQ) are compositionally biased toward low complexity. Zn(2+)-binding residues include Cys894, Cys896, Cys905, and His906. Over residues 900–910 (KKYKHCHGQLS) the composition is skewed to basic residues.

This sequence belongs to the SecA family. As to quaternary structure, monomer and homodimer. Part of the essential Sec protein translocation apparatus which comprises SecA, SecYEG and auxiliary proteins SecDF-YajC and YidC. Zn(2+) serves as cofactor.

Its subcellular location is the cell inner membrane. The protein resides in the cytoplasm. The catalysed reaction is ATP + H2O + cellular proteinSide 1 = ADP + phosphate + cellular proteinSide 2.. Its function is as follows. Part of the Sec protein translocase complex. Interacts with the SecYEG preprotein conducting channel. Has a central role in coupling the hydrolysis of ATP to the transfer of proteins into and across the cell membrane, serving both as a receptor for the preprotein-SecB complex and as an ATP-driven molecular motor driving the stepwise translocation of polypeptide chains across the membrane. The polypeptide is Protein translocase subunit SecA (Stenotrophomonas maltophilia (strain K279a)).